Consider the following 258-residue polypeptide: 5-oxoprolinase subunit A 2 (258 aa).

It belongs to the LamB/PxpA family. As to quaternary structure, forms a complex composed of PxpA, PxpB and PxpC.

It catalyses the reaction 5-oxo-L-proline + ATP + 2 H2O = L-glutamate + ADP + phosphate + H(+). Functionally, catalyzes the cleavage of 5-oxoproline to form L-glutamate coupled to the hydrolysis of ATP to ADP and inorganic phosphate. The sequence is that of 5-oxoprolinase subunit A 2 from Pseudomonas putida (strain ATCC 47054 / DSM 6125 / CFBP 8728 / NCIMB 11950 / KT2440).